The chain runs to 419 residues: L-rhamnose isomerase (419 aa).

Mn(2+)-binding residues include histidine 262, aspartate 294, and aspartate 296.

This sequence belongs to the rhamnose isomerase family. As to quaternary structure, homotetramer. Mn(2+) is required as a cofactor.

The protein resides in the cytoplasm. It carries out the reaction L-rhamnopyranose = L-rhamnulose. The protein operates within carbohydrate degradation; L-rhamnose degradation; glycerone phosphate from L-rhamnose: step 1/3. Catalyzes the interconversion of L-rhamnose and L-rhamnulose. The chain is L-rhamnose isomerase from Escherichia coli O7:K1 (strain IAI39 / ExPEC).